Reading from the N-terminus, the 345-residue chain is CRISPR-associated endonuclease Cas1 1 (345 aa).

Positions 168, 239, and 254 each coordinate a divalent metal cation.

It belongs to the CRISPR-associated endonuclease Cas1 family. Forms a heterotetramer with a Cas2 homodimer. Homodimer. A divalent metal cation serves as cofactor.

In terms of biological role, CRISPR (clustered regularly interspaced short palindromic repeat), is an adaptive immune system that provides protection against mobile genetic elements (viruses, transposable elements and conjugative plasmids). CRISPR clusters contain sequences complementary to antecedent mobile elements and target invading nucleic acids. CRISPR clusters are transcribed and processed into CRISPR RNA (crRNA). Involved in the integration of spacer DNA into the CRISPR cassette. Acts as a dsDNA and ssRNA nuclease, binds to linear and circular dsDNA and linear ssRNA and ssDNA. The sequence is that of CRISPR-associated endonuclease Cas1 1 from Archaeoglobus fulgidus (strain ATCC 49558 / DSM 4304 / JCM 9628 / NBRC 100126 / VC-16).